The following is a 310-amino-acid chain: Zinc finger protein-like 1 (310 aa).

The segment at 1 to 43 (MGLCKCPKRKVTNLFCFEHRVNVCEHCLVANHAKCIVQSYLQW) adopts a B box-type; degenerate zinc-finger fold. The Cytoplasmic portion of the chain corresponds to 1 to 266 (MGLCKCPKRK…RPLTLLQRAG (266 aa)). An RING-type; degenerate zinc finger spans residues 53–101 (CRLCNIPLASRETTRLVCYDLFHWACLNERAAQLPRNTAPAGYQCPSCN). Residues 145–231 (PEPLNTSDFS…RTPGLHGDCD (87 aa)) are disordered. A compositionally biased stretch (polar residues) spans 148–165 (LNTSDFSDWSSFNASSTP). Residues 213 to 224 (KVYDTRDDDRTP) are compositionally biased toward basic and acidic residues. The helical transmembrane segment at 267-287 (LLLLLGLLGFLALLALMSRLG) threads the bilayer. Residues 288-310 (RAAADSDPNLDPLMNPHIRVGPS) are Lumenal-facing.

Belongs to the ZFPL1 family. Interacts with GOLGA2/GM130. Phosphorylated. As to expression, expressed strongly in the exocrine pancreas.

The protein resides in the golgi apparatus. The protein localises to the cis-Golgi network membrane. Required for cis-Golgi integrity and efficient ER to Golgi transport. Involved in the maintenance of the integrity of the cis-Golgi, possibly via its interaction with GOLGA2/GM130. This chain is Zinc finger protein-like 1 (ZFPL1), found in Homo sapiens (Human).